Reading from the N-terminus, the 297-residue chain is Formylmethanofuran--tetrahydromethanopterin formyltransferase-like protein (297 aa).

This sequence belongs to the FTR family.

This Methanothermobacter thermautotrophicus (strain ATCC 29096 / DSM 1053 / JCM 10044 / NBRC 100330 / Delta H) (Methanobacterium thermoautotrophicum) protein is Formylmethanofuran--tetrahydromethanopterin formyltransferase-like protein (ehaS).